The primary structure comprises 450 residues: tRNA modification GTPase MnmE (450 aa).

(6S)-5-formyl-5,6,7,8-tetrahydrofolate is bound by residues Arg23, Glu80, and Arg123. A TrmE-type G domain is found at 219–372 (GLHVVLAGKP…LRQRLLQLAG (154 aa)). A K(+)-binding site is contributed by Asn229. Residues 229–234 (NVGKSS), 248–254 (TPIAGTT), 273–276 (DTAG), and 353–355 (SAR) each bind GTP. Residue Ser233 coordinates Mg(2+). Residues Thr248, Ile250, and Thr253 each coordinate K(+). Thr254 is a Mg(2+) binding site. Residue Lys450 participates in (6S)-5-formyl-5,6,7,8-tetrahydrofolate binding.

It belongs to the TRAFAC class TrmE-Era-EngA-EngB-Septin-like GTPase superfamily. TrmE GTPase family. Homodimer. Heterotetramer of two MnmE and two MnmG subunits. The cofactor is K(+).

It localises to the cytoplasm. Its function is as follows. Exhibits a very high intrinsic GTPase hydrolysis rate. Involved in the addition of a carboxymethylaminomethyl (cmnm) group at the wobble position (U34) of certain tRNAs, forming tRNA-cmnm(5)s(2)U34. The polypeptide is tRNA modification GTPase MnmE (Bordetella bronchiseptica (strain ATCC BAA-588 / NCTC 13252 / RB50) (Alcaligenes bronchisepticus)).